Here is a 374-residue protein sequence, read N- to C-terminus: Peptide chain release factor 2 (374 aa).

Gln-249 is subject to N5-methylglutamine.

Belongs to the prokaryotic/mitochondrial release factor family. Methylated by PrmC. Methylation increases the termination efficiency of RF2.

It is found in the cytoplasm. In terms of biological role, peptide chain release factor 2 directs the termination of translation in response to the peptide chain termination codons UGA and UAA. This is Peptide chain release factor 2 from Ruegeria sp. (strain TM1040) (Silicibacter sp.).